The following is a 259-amino-acid chain: MQSWRQQLNLFLIAMGFFTRIPMPKWVEVDAEKLNQASRYFGLVGTLIGVLSALVYSVMLHWVSPSIAIIFAMIASVLLTGGFHEDGLADTADGLGGGWTVEAKLQIMKDSRLGSYGALALVLCLLLKWQLLSELALFDPSSVSLALILGHTLSRVVAASFIFSEQYVSDDASSKSKPLAMQQSINELSILLATAAISLLLISFMQALVLILGLLSVRIALAWWFNKQIGGYTGDTLGATQQIAEVVCYLLLLIVGASW.

A run of 6 helical transmembrane segments spans residues 37 to 57 (ASRYFGLVGTLIGVLSALVYS), 58 to 78 (VMLHWVSPSIAIIFAMIASVL), 118 to 138 (ALALVLCLLLKWQLLSELALF), 143 to 163 (VSLALILGHTLSRVVAASFIF), 195 to 215 (AAISLLLISFMQALVLILGLL), and 237 to 257 (LGATQQIAEVVCYLLLLIVGA).

It belongs to the CobS family. It depends on Mg(2+) as a cofactor.

Its subcellular location is the cell inner membrane. The enzyme catalyses alpha-ribazole + adenosylcob(III)inamide-GDP = adenosylcob(III)alamin + GMP + H(+). It carries out the reaction alpha-ribazole 5'-phosphate + adenosylcob(III)inamide-GDP = adenosylcob(III)alamin 5'-phosphate + GMP + H(+). It functions in the pathway cofactor biosynthesis; adenosylcobalamin biosynthesis; adenosylcobalamin from cob(II)yrinate a,c-diamide: step 7/7. Its function is as follows. Joins adenosylcobinamide-GDP and alpha-ribazole to generate adenosylcobalamin (Ado-cobalamin). Also synthesizes adenosylcobalamin 5'-phosphate from adenosylcobinamide-GDP and alpha-ribazole 5'-phosphate. This is Adenosylcobinamide-GDP ribazoletransferase from Shewanella piezotolerans (strain WP3 / JCM 13877).